Reading from the N-terminus, the 161-residue chain is NADH-quinone oxidoreductase subunit I (161 aa).

4Fe-4S ferredoxin-type domains are found at residues 52–82 (LRRYPDGEERCIACKLCEAICPAQAITIEAK) and 92–121 (TKYDIDMTKCIYCGLCQEACPVDAIVEGPN). [4Fe-4S] cluster-binding residues include cysteine 62, cysteine 65, cysteine 68, cysteine 72, cysteine 101, cysteine 104, cysteine 107, and cysteine 111.

The protein belongs to the complex I 23 kDa subunit family. In terms of assembly, NDH-1 is composed of 14 different subunits. Subunits NuoA, H, J, K, L, M, N constitute the membrane sector of the complex. [4Fe-4S] cluster serves as cofactor.

The protein localises to the cell inner membrane. It carries out the reaction a quinone + NADH + 5 H(+)(in) = a quinol + NAD(+) + 4 H(+)(out). NDH-1 shuttles electrons from NADH, via FMN and iron-sulfur (Fe-S) centers, to quinones in the respiratory chain. The immediate electron acceptor for the enzyme in this species is believed to be ubiquinone. Couples the redox reaction to proton translocation (for every two electrons transferred, four hydrogen ions are translocated across the cytoplasmic membrane), and thus conserves the redox energy in a proton gradient. The protein is NADH-quinone oxidoreductase subunit I of Orientia tsutsugamushi (strain Boryong) (Rickettsia tsutsugamushi).